The chain runs to 398 residues: Acetate kinase (398 aa).

Asn-7 contributes to the Mg(2+) binding site. Lys-14 contacts ATP. Position 91 (Arg-91) interacts with substrate. Residue Asp-148 is the Proton donor/acceptor of the active site. Residues 208–212, 283–285, and 331–335 contribute to the ATP site; these read HIGNG, DLR, and GVGEN. Residue Glu-385 coordinates Mg(2+).

Belongs to the acetokinase family. In terms of assembly, homodimer. The cofactor is Mg(2+). Requires Mn(2+) as cofactor.

Its subcellular location is the cytoplasm. It carries out the reaction acetate + ATP = acetyl phosphate + ADP. It functions in the pathway metabolic intermediate biosynthesis; acetyl-CoA biosynthesis; acetyl-CoA from acetate: step 1/2. Catalyzes the formation of acetyl phosphate from acetate and ATP. Can also catalyze the reverse reaction. This is Acetate kinase from Porphyromonas gingivalis (strain ATCC 33277 / DSM 20709 / CIP 103683 / JCM 12257 / NCTC 11834 / 2561).